The following is a 654-amino-acid chain: Peptide-N(4)-(N-acetyl-beta-glucosaminyl)asparagine amidase (654 aa).

A2 carries the post-translational modification N-acetylalanine. The PUB domain occupies 30-91 (EASKLLLTYA…EGETHLIFPK (62 aa)). Over residues 112–123 (RLDGSNKSHKVE) the composition is skewed to basic and acidic residues. The segment at 112-167 (RLDGSNKSHKVESSQQPAASTQLPTTPSSNPSGLNQHTRNRQGQSPDPPSASTVTP) is disordered. Polar residues predominate over residues 124 to 167 (SSQQPAASTQLPTTPSSNPSGLNQHTRNRQGQSPDPPSASTVTP). T137 bears the Phosphothreonine mark. Zn(2+) is bound by residues C250, C253, C283, and C286. C309 serves as the catalytic Nucleophile. Active-site residues include H336 and D353. In terms of domain architecture, PAW spans 454–654 (ELGGRISGSV…LEIIIKFSDL (201 aa)).

This sequence belongs to the transglutaminase-like superfamily. PNGase family. In terms of assembly, component of a complex required to couple retrotranslocation, ubiquitination and deglycosylation composed of NGLY1, SAKS1, AMFR, VCP and RAD23B. Interacts with the proteasome components RAD23B and PSMC1. Interacts with directly with VCP. Interacts with DERL1, bringing it close to the endoplasmic reticulum membrane. Interacts with SAKS1. The cofactor is Zn(2+).

The protein localises to the cytoplasm. The enzyme catalyses Hydrolysis of an N(4)-(acetyl-beta-D-glucosaminyl)asparagine residue in which the glucosamine residue may be further glycosylated, to yield a (substituted) N-acetyl-beta-D-glucosaminylamine and a peptide containing an aspartate residue.. Inhibited by Z-VAD-fmk, a well-known caspase inhibitor, which inhibits enzyme activity through covalent binding of the carbohydrate to the single Cys-306 residue. In terms of biological role, specifically deglycosylates the denatured form of N-linked glycoproteins in the cytoplasm and assists their proteasome-mediated degradation. Cleaves the beta-aspartyl-glucosamine (GlcNAc) of the glycan and the amide side chain of Asn, converting Asn to Asp. Prefers proteins containing high-mannose over those bearing complex type oligosaccharides. Can recognize misfolded proteins in the endoplasmic reticulum that are exported to the cytosol to be destroyed and deglycosylate them, while it has no activity toward native proteins. Deglycosylation is a prerequisite for subsequent proteasome-mediated degradation of some, but not all, misfolded glycoproteins. This is Peptide-N(4)-(N-acetyl-beta-glucosaminyl)asparagine amidase (NGLY1) from Macaca fascicularis (Crab-eating macaque).